We begin with the raw amino-acid sequence, 101 residues long: NADH-quinone oxidoreductase subunit K (101 aa).

3 consecutive transmembrane segments (helical) span residues 2-22, 28-48, and 62-82; these read TLSA…YGAL, VIVL…FVAF, and FALF…AALI.

This sequence belongs to the complex I subunit 4L family. In terms of assembly, NDH-1 is composed of 14 different subunits. Subunits NuoA, H, J, K, L, M, N constitute the membrane sector of the complex.

The protein localises to the cell membrane. It carries out the reaction a quinone + NADH + 5 H(+)(in) = a quinol + NAD(+) + 4 H(+)(out). NDH-1 shuttles electrons from NADH, via FMN and iron-sulfur (Fe-S) centers, to quinones in the respiratory chain. The immediate electron acceptor for the enzyme in this species is believed to be a menaquinone. Couples the redox reaction to proton translocation (for every two electrons transferred, four hydrogen ions are translocated across the cytoplasmic membrane), and thus conserves the redox energy in a proton gradient. The polypeptide is NADH-quinone oxidoreductase subunit K (Geobacillus kaustophilus (strain HTA426)).